The following is a 35-amino-acid chain: Photosystem II reaction center protein T (35 aa).

A helical membrane pass occupies residues 3 to 23 (ALVYTFLLVSTLGIIFFAIFF).

Belongs to the PsbT family. PSII is composed of 1 copy each of membrane proteins PsbA, PsbB, PsbC, PsbD, PsbE, PsbF, PsbH, PsbI, PsbJ, PsbK, PsbL, PsbM, PsbT, PsbY, PsbZ, Psb30/Ycf12, at least 3 peripheral proteins of the oxygen-evolving complex and a large number of cofactors. It forms dimeric complexes.

It localises to the plastid. Its subcellular location is the chloroplast thylakoid membrane. Found at the monomer-monomer interface of the photosystem II (PS II) dimer, plays a role in assembly and dimerization of PSII. PSII is a light-driven water plastoquinone oxidoreductase, using light energy to abstract electrons from H(2)O, generating a proton gradient subsequently used for ATP formation. This Taxus brevifolia (Pacific yew) protein is Photosystem II reaction center protein T.